The chain runs to 306 residues: Recombination-associated protein RdgC (306 aa).

This sequence belongs to the RdgC family.

The protein localises to the cytoplasm. Its subcellular location is the nucleoid. Functionally, may be involved in recombination. The chain is Recombination-associated protein RdgC from Pseudomonas putida (strain ATCC 47054 / DSM 6125 / CFBP 8728 / NCIMB 11950 / KT2440).